A 307-amino-acid chain; its full sequence is Type 2A encapsulin shell protein (307 aa).

It belongs to the encapsulin family. Family 2A subfamily. As to quaternary structure, homooligomeric. The encapsulin nanocompartment is formed by 60 subunits; monomers form pentamers which assemble to form shells. There are 12 charged pores where the pentamers meet as well as 3-fold axis channels and dimer channels.

It localises to the encapsulin nanocompartment. Its function is as follows. Shell component of a type 2A encapsulin nanocompartment. Forms encapsulin nanocompartments about 24 nm in diameter from 60 monomers. Probably encapsulates at least cysteine desulfurase (CyD) and allows passage of cysteine into its interior, probably involved in sulfur metabolism. In Mycobacterium avium, this protein is Type 2A encapsulin shell protein.